Consider the following 899-residue polypeptide: Protein translocase subunit SecA (899 aa).

Residues Q87, 105–109, and D516 contribute to the ATP site; that span reads GEGKT. Zn(2+) is bound by residues C884, C886, C895, and H896.

It belongs to the SecA family. As to quaternary structure, monomer and homodimer. Part of the essential Sec protein translocation apparatus which comprises SecA, SecYEG and auxiliary proteins SecDF. Other proteins may also be involved. Requires Zn(2+) as cofactor.

Its subcellular location is the cell inner membrane. The protein resides in the cytoplasm. It carries out the reaction ATP + H2O + cellular proteinSide 1 = ADP + phosphate + cellular proteinSide 2.. Part of the Sec protein translocase complex. Interacts with the SecYEG preprotein conducting channel. Has a central role in coupling the hydrolysis of ATP to the transfer of proteins into and across the cell membrane, serving as an ATP-driven molecular motor driving the stepwise translocation of polypeptide chains across the membrane. The polypeptide is Protein translocase subunit SecA (Borreliella burgdorferi (strain ATCC 35210 / DSM 4680 / CIP 102532 / B31) (Borrelia burgdorferi)).